We begin with the raw amino-acid sequence, 191 residues long: 3-isopropylmalate dehydratase small subunit (191 aa).

Belongs to the LeuD family. LeuD type 1 subfamily. In terms of assembly, heterodimer of LeuC and LeuD.

The enzyme catalyses (2R,3S)-3-isopropylmalate = (2S)-2-isopropylmalate. The protein operates within amino-acid biosynthesis; L-leucine biosynthesis; L-leucine from 3-methyl-2-oxobutanoate: step 2/4. Its function is as follows. Catalyzes the isomerization between 2-isopropylmalate and 3-isopropylmalate, via the formation of 2-isopropylmaleate. The chain is 3-isopropylmalate dehydratase small subunit from Anaeromyxobacter dehalogenans (strain 2CP-C).